A 382-amino-acid polypeptide reads, in one-letter code: Protein RecA (382 aa).

79 to 86 (GPESSGKT) is a binding site for ATP.

The protein belongs to the RecA family.

The protein resides in the cytoplasm. Functionally, can catalyze the hydrolysis of ATP in the presence of single-stranded DNA, the ATP-dependent uptake of single-stranded DNA by duplex DNA, and the ATP-dependent hybridization of homologous single-stranded DNAs. It interacts with LexA causing its activation and leading to its autocatalytic cleavage. The protein is Protein RecA of Streptococcus sanguinis (strain SK36).